Consider the following 179-residue polypeptide: Large ribosomal subunit protein uL5 (179 aa).

It belongs to the universal ribosomal protein uL5 family. In terms of assembly, part of the 50S ribosomal subunit; part of the 5S rRNA/L5/L18/L25 subcomplex. Contacts the 5S rRNA and the P site tRNA. Forms a bridge to the 30S subunit in the 70S ribosome.

Its function is as follows. This is one of the proteins that bind and probably mediate the attachment of the 5S RNA into the large ribosomal subunit, where it forms part of the central protuberance. In the 70S ribosome it contacts protein S13 of the 30S subunit (bridge B1b), connecting the 2 subunits; this bridge is implicated in subunit movement. Contacts the P site tRNA; the 5S rRNA and some of its associated proteins might help stabilize positioning of ribosome-bound tRNAs. The sequence is that of Large ribosomal subunit protein uL5 from Shewanella sp. (strain MR-4).